A 192-amino-acid polypeptide reads, in one-letter code: Ribosome maturation factor RimP (192 aa).

It belongs to the RimP family.

It is found in the cytoplasm. In terms of biological role, required for maturation of 30S ribosomal subunits. The protein is Ribosome maturation factor RimP of Mycobacterium sp. (strain JLS).